Reading from the N-terminus, the 121-residue chain is UPF0102 protein DSY2577 (121 aa).

The protein belongs to the UPF0102 family.

The sequence is that of UPF0102 protein DSY2577 from Desulfitobacterium hafniense (strain Y51).